A 365-amino-acid polypeptide reads, in one-letter code: Cyclin-D5-2 (365 aa).

The protein belongs to the cyclin family. Cyclin D subfamily.

The polypeptide is Cyclin-D5-2 (CYCD5-2) (Oryza sativa subsp. japonica (Rice)).